Here is a 531-residue protein sequence, read N- to C-terminus: Type 2 DNA topoisomerase 6 subunit B (531 aa).

ATP is bound by residues N42, D76, 97 to 98, 106 to 113, and K427; these read SK and GMYGLGVK.

The protein belongs to the TOP6B family. Homodimer. Heterotetramer of two Top6A and two Top6B chains.

The enzyme catalyses ATP-dependent breakage, passage and rejoining of double-stranded DNA.. Its function is as follows. Relaxes both positive and negative superturns and exhibits a strong decatenase activity. This chain is Type 2 DNA topoisomerase 6 subunit B, found in Metallosphaera sedula (strain ATCC 51363 / DSM 5348 / JCM 9185 / NBRC 15509 / TH2).